The chain runs to 419 residues: MNLLEHMGKAAKQASWQLAMLSTAKKNQALAVIANLLESESQTILQANERDMAAARESGMSEALLDRLLLTPARLAAIANDVRQVCRLNDPVGRVIDGSLLDSGLKLERRRVPLGVIGVIYEARPNVTIDVASLCLKTGNAVILRGGKETHYTNQATVNVIQRALEQCGLPAAAVQAIESPDRQLVNELLRLDRYVDMLIPRGGASLHKLCREQSTIPVITGGIGVCHTFVDENADFEKALLVIENAKIQRPSACNSLETLLVHQAVAKTFLPLLSARMHAFGVTLHASPLAMPYLADGKAKVVAVEAADYDDEWLSLDLNVDIVTDIDAAIDHIREHGTSHSDAILTRSLSHAEYFVRAVDSSAVYVNASTRFTDGGQFGLGAEVAVSTQKLHARGPMGLDALTTYKWIGYGDDLVRS.

The protein belongs to the gamma-glutamyl phosphate reductase family.

It is found in the cytoplasm. The catalysed reaction is L-glutamate 5-semialdehyde + phosphate + NADP(+) = L-glutamyl 5-phosphate + NADPH + H(+). The protein operates within amino-acid biosynthesis; L-proline biosynthesis; L-glutamate 5-semialdehyde from L-glutamate: step 2/2. In terms of biological role, catalyzes the NADPH-dependent reduction of L-glutamate 5-phosphate into L-glutamate 5-semialdehyde and phosphate. The product spontaneously undergoes cyclization to form 1-pyrroline-5-carboxylate. This chain is Gamma-glutamyl phosphate reductase, found in Yersinia pestis.